Here is a 710-residue protein sequence, read N- to C-terminus: PWWP domain-containing DNA repair factor 3A (710 aa).

Positions 106-160 (QESSAGTGRADRSLRGKPMEHVSSPCDSNSSSLPRGDVLGSSRPHRRRPCVQQSL) are disordered. Basic and acidic residues predominate over residues 114-125 (RADRSLRGKPME). A compositionally biased stretch (low complexity) spans 128 to 137 (SSPCDSNSSS). Ser161 carries the post-translational modification Phosphoserine. Disordered stretches follow at residues 177-204 (KKGL…ESGS) and 230-398 (NGSS…EEPP). Low complexity predominate over residues 288–297 (PSACSEPGEC). Phosphoserine is present on residues Ser374 and Ser375. Polar residues predominate over residues 375 to 385 (SEESMGSNSMR). In terms of domain architecture, PWWP spans 411-472 (VGMLVWHKHK…KHFDCKEKQT (62 aa)).

This sequence belongs to the PWWP3A family. In terms of assembly, interacts with TP53BP1 (via BRCT domain); the interaction is not dependent on its phosphorylation status. Binds nucleosomes. Interacts with trimethylated 'Lys-36' of histone H3 (H3K36me3) (in vitro).

The protein resides in the nucleus. Functionally, involved in the DNA damage response pathway by contributing to the maintenance of chromatin architecture. Recruited to the vicinity of DNA breaks by TP53BP1 and plays an accessory role to facilitate damage-induced chromatin changes and promoting chromatin relaxation. Required for efficient DNA repair and cell survival following DNA damage. In Homo sapiens (Human), this protein is PWWP domain-containing DNA repair factor 3A.